A 932-amino-acid chain; its full sequence is Protocadherin gamma-A2 (932 aa).

An N-terminal signal peptide occupies residues 1–28; the sequence is MAALQKLPHCRKLVLLCFLLATLWEARA. Cadherin domains follow at residues 29 to 133, 134 to 242, 243 to 347, 348 to 452, 453 to 562, and 570 to 682; these read GQIR…APRF, GVEE…APVF, TQPE…APEF, YMTS…APAF, SRTS…APEI, and DGST…EPSA. Topologically, residues 29 to 692 are extracellular; that stretch reads GQIRYSVREE…IPNDSDLTLY (664 aa). 2 N-linked (GlcNAc...) asparagine glycosylation sites follow: asparagine 419 and asparagine 545. The N-linked (GlcNAc...) asparagine glycan is linked to asparagine 685. The chain crosses the membrane as a helical span at residues 693–713; the sequence is LVVAVAAVSCVFLAFVIVLLA. The Cytoplasmic segment spans residues 714-932; sequence HRLRRWHKSR…KKKSGKKEKK (219 aa). Disordered stretches follow at residues 798-841 and 902-932; these read LEEE…WPNN and ATLT…KEKK. The segment covering 806–841 has biased composition (polar residues); that stretch reads FSQQAPPNTDWRFSQAQRPGTSGSQNGDDTGTWPNN. Residues 922 to 932 are compositionally biased toward basic residues; that stretch reads NKKKSGKKEKK.

Its subcellular location is the cell membrane. In terms of biological role, potential calcium-dependent cell-adhesion protein. May be involved in the establishment and maintenance of specific neuronal connections in the brain. The sequence is that of Protocadherin gamma-A2 (PCDHGA2) from Homo sapiens (Human).